Here is a 215-residue protein sequence, read N- to C-terminus: NADH-quinone oxidoreductase subunit C (215 aa).

It belongs to the complex I 30 kDa subunit family. NDH-1 is composed of 14 different subunits. Subunits NuoB, C, D, E, F, and G constitute the peripheral sector of the complex.

The protein localises to the cell inner membrane. The catalysed reaction is a quinone + NADH + 5 H(+)(in) = a quinol + NAD(+) + 4 H(+)(out). In terms of biological role, NDH-1 shuttles electrons from NADH, via FMN and iron-sulfur (Fe-S) centers, to quinones in the respiratory chain. The immediate electron acceptor for the enzyme in this species is believed to be ubiquinone. Couples the redox reaction to proton translocation (for every two electrons transferred, four hydrogen ions are translocated across the cytoplasmic membrane), and thus conserves the redox energy in a proton gradient. The protein is NADH-quinone oxidoreductase subunit C of Methylobacterium sp. (strain 4-46).